A 612-amino-acid chain; its full sequence is Dihydroxy-acid dehydratase (612 aa).

Asp81 provides a ligand contact to Mg(2+). Cys122 provides a ligand contact to [2Fe-2S] cluster. The Mg(2+) site is built by Asp123 and Lys124. Lys124 is subject to N6-carboxylysine. Cys193 lines the [2Fe-2S] cluster pocket. Residue Glu489 participates in Mg(2+) binding. Catalysis depends on Ser515, which acts as the Proton acceptor.

It belongs to the IlvD/Edd family. As to quaternary structure, homodimer. [2Fe-2S] cluster serves as cofactor. Mg(2+) is required as a cofactor.

It catalyses the reaction (2R)-2,3-dihydroxy-3-methylbutanoate = 3-methyl-2-oxobutanoate + H2O. It carries out the reaction (2R,3R)-2,3-dihydroxy-3-methylpentanoate = (S)-3-methyl-2-oxopentanoate + H2O. It participates in amino-acid biosynthesis; L-isoleucine biosynthesis; L-isoleucine from 2-oxobutanoate: step 3/4. It functions in the pathway amino-acid biosynthesis; L-valine biosynthesis; L-valine from pyruvate: step 3/4. Functionally, functions in the biosynthesis of branched-chain amino acids. Catalyzes the dehydration of (2R,3R)-2,3-dihydroxy-3-methylpentanoate (2,3-dihydroxy-3-methylvalerate) into 2-oxo-3-methylpentanoate (2-oxo-3-methylvalerate) and of (2R)-2,3-dihydroxy-3-methylbutanoate (2,3-dihydroxyisovalerate) into 2-oxo-3-methylbutanoate (2-oxoisovalerate), the penultimate precursor to L-isoleucine and L-valine, respectively. The polypeptide is Dihydroxy-acid dehydratase (Xanthomonas campestris pv. campestris (strain 8004)).